The chain runs to 316 residues: Aspartate carbamoyltransferase catalytic subunit (316 aa).

The carbamoyl phosphate site is built by arginine 66 and threonine 67. Lysine 94 is an L-aspartate binding site. Carbamoyl phosphate-binding residues include arginine 116, histidine 146, and glutamine 149. 2 residues coordinate L-aspartate: arginine 179 and arginine 234. 2 residues coordinate carbamoyl phosphate: glycine 275 and proline 276.

Belongs to the aspartate/ornithine carbamoyltransferase superfamily. ATCase family. Heterododecamer (2C3:3R2) of six catalytic PyrB chains organized as two trimers (C3), and six regulatory PyrI chains organized as three dimers (R2).

The enzyme catalyses carbamoyl phosphate + L-aspartate = N-carbamoyl-L-aspartate + phosphate + H(+). It participates in pyrimidine metabolism; UMP biosynthesis via de novo pathway; (S)-dihydroorotate from bicarbonate: step 2/3. Catalyzes the condensation of carbamoyl phosphate and aspartate to form carbamoyl aspartate and inorganic phosphate, the committed step in the de novo pyrimidine nucleotide biosynthesis pathway. The sequence is that of Aspartate carbamoyltransferase catalytic subunit from Nitrosomonas europaea (strain ATCC 19718 / CIP 103999 / KCTC 2705 / NBRC 14298).